The chain runs to 246 residues: tRNA pseudouridine synthase A (246 aa).

Asp-51 functions as the Nucleophile in the catalytic mechanism. Tyr-105 is a binding site for substrate.

It belongs to the tRNA pseudouridine synthase TruA family.

The catalysed reaction is uridine(38/39/40) in tRNA = pseudouridine(38/39/40) in tRNA. Formation of pseudouridine at positions 38, 39 and 40 in the anticodon stem and loop of transfer RNAs. This Thermoplasma volcanium (strain ATCC 51530 / DSM 4299 / JCM 9571 / NBRC 15438 / GSS1) protein is tRNA pseudouridine synthase A.